We begin with the raw amino-acid sequence, 304 residues long: Homoserine kinase (304 aa).

92–102 (PLARGLGSSAT) is an ATP binding site.

Belongs to the GHMP kinase family. Homoserine kinase subfamily.

The protein localises to the cytoplasm. The enzyme catalyses L-homoserine + ATP = O-phospho-L-homoserine + ADP + H(+). Its pathway is amino-acid biosynthesis; L-threonine biosynthesis; L-threonine from L-aspartate: step 4/5. In terms of biological role, catalyzes the ATP-dependent phosphorylation of L-homoserine to L-homoserine phosphate. In Nostoc punctiforme (strain ATCC 29133 / PCC 73102), this protein is Homoserine kinase.